A 276-amino-acid chain; its full sequence is DnaJ homolog subfamily C member 27-B (276 aa).

Residues 23-30 (GNAEVGKS), 71-75 (DMAGH), and 137-140 (NKID) contribute to the GTP site. The region spanning 220–276 (DSWDMLGVKPGATRDEVNKAYRKLAVLLHPDKCVAPGSEDAFKAVVNARTALLKNIK) is the J domain.

This sequence belongs to the small GTPase superfamily. Rab family.

The protein resides in the nucleus. Its function is as follows. GTPase possibly involved in regulation of the MEK/ERK pathway. This is DnaJ homolog subfamily C member 27-B (dnajc27-b) from Xenopus laevis (African clawed frog).